The following is a 348-amino-acid chain: Phenylalanine--tRNA ligase alpha subunit (348 aa).

Glu-259 serves as a coordination point for Mg(2+).

The protein belongs to the class-II aminoacyl-tRNA synthetase family. Phe-tRNA synthetase alpha subunit type 1 subfamily. In terms of assembly, tetramer of two alpha and two beta subunits. Mg(2+) serves as cofactor.

It is found in the cytoplasm. The catalysed reaction is tRNA(Phe) + L-phenylalanine + ATP = L-phenylalanyl-tRNA(Phe) + AMP + diphosphate + H(+). The protein is Phenylalanine--tRNA ligase alpha subunit of Latilactobacillus sakei subsp. sakei (strain 23K) (Lactobacillus sakei subsp. sakei).